The chain runs to 186 residues: Small ribosomal subunit protein uS5 (186 aa).

An S5 DRBM domain is found at 20–83 (FVDKLVHINR…EAAKRDMIFV (64 aa)).

The protein belongs to the universal ribosomal protein uS5 family. In terms of assembly, part of the 30S ribosomal subunit. Contacts proteins S4 and S8.

With S4 and S12 plays an important role in translational accuracy. Its function is as follows. Located at the back of the 30S subunit body where it stabilizes the conformation of the head with respect to the body. This chain is Small ribosomal subunit protein uS5, found in Brucella ovis (strain ATCC 25840 / 63/290 / NCTC 10512).